We begin with the raw amino-acid sequence, 718 residues long: MITEPSLTGISGMVNRNRLSGLPDQPSSHSFTPVTLYDGFNYNLSSDHINTVVAAPENSVFIREEEEEEDPADDFDFSDAVLGYISQMLNEEDMDDKVCMLQESLDLEAAERSLYEAIGKKYPPSPERNLAFAERNSENLDRVVPGNYTGGDCIGFGNGGIKPLSSGFTLDFRNPQSCSSILSVPQSNGLITIYGDGIDESSKNNRENHQSVWLFRREIEEANRFNPEENELIVNFREENCVSKARKNSSRDEICVEEERSSKLPAVFGEDILRSDVVDKILVHVPGGESMKEFNALRDVLKKGVEKKKASDAQGGKRRARGRGRGRGRGGGGGQNGKKEVVDLRSLLIHCAQAVAADDRRCAGQLLKQIRLHSTPFGDGNQRLAHCFANGLEARLAGTGSQIYKGIVSKPRSAAAVLKAHQLFLACCPFRKLSYFITNKTIRDLVGNSQRVHVIDFGILYGFQWPTLIHRFSMYGSPKVRITGIEFPQPGFRPAQRVEETGQRLAAYAKLFGVPFEYKAIAKKWDAIQLEDLDIDRDEITVVNCLYRAENLHDESVKVESCRDTVLNLIGKINPDLFVFGIVNGAYNAPFFVTRFREALFHFSSIFDMLETIVPREDEERMFLEMEVFGREALNVIACEGWERVERPETYKQWHVRAMRSGLVQVPFDPSIMKTSLHKVHTFYHKDFVIDQDNRWLLQGWKGRTVMALSVWKPESKA.

The interval 305–338 (VEKKKASDAQGGKRRARGRGRGRGRGGGGGQNGK) is disordered. Over residues 316–328 (GKRRARGRGRGRG) the composition is skewed to basic residues. In terms of domain architecture, GRAS spans 335-713 (QNGKKEVVDL…RTVMALSVWK (379 aa)). The leucine repeat I (LRI) stretch occupies residues 342 to 402 (VDLRSLLIHC…EARLAGTGSQ (61 aa)). Residues 421–484 (HQLFLACCPF…YGSPKVRITG (64 aa)) form a VHIID region. Residues 452–456 (VHVID) carry the VHIID motif. Positions 500–532 (ETGQRLAAYAKLFGVPFEYKAIAKKWDAIQLED) are leucine repeat II (LRII). Positions 541 to 635 (TVVNCLYRAE…MEVFGREALN (95 aa)) are PFYRE. Residues 638-713 (ACEGWERVER…RTVMALSVWK (76 aa)) are SAW.

This sequence belongs to the GRAS family. As to expression, expressed in cotyledons, leaves and flowers, and in the elongation zone in root.

It localises to the nucleus. Its function is as follows. Probable transcription factor involved in plant development. The protein is Scarecrow-like protein 9 (SCL9) of Arabidopsis thaliana (Mouse-ear cress).